A 227-amino-acid polypeptide reads, in one-letter code: MTQQKPPAGADLSQTFIRFALDAGVLSFGEFVTKAGRKSPYFFNAGLFNQGAMLGEVAQFYAKTLLASGVQFDVLFGPAYKGITLASATAVALAGMGRDVGFAYNRKEAKDHGEGGTLVGAKLQGKVVIVDDVISAGTSVRESVNMIRAAGAEPAAVLIALDRMEKSGTAEQVGTHSAVQDVQREYGIPVIAIASLKDLLAYLDASQDPALSASREAVAAYRQRYGV.

Lys-34 is a binding site for 5-phospho-alpha-D-ribose 1-diphosphate. 42–43 (FF) is an orotate binding site. 5-phospho-alpha-D-ribose 1-diphosphate contacts are provided by residues 80 to 81 (YK), Arg-106, Lys-107, Lys-110, His-112, and 131 to 139 (DDVISAGTS). Positions 135 and 163 each coordinate orotate.

This sequence belongs to the purine/pyrimidine phosphoribosyltransferase family. PyrE subfamily. Homodimer. Requires Mg(2+) as cofactor.

It catalyses the reaction orotidine 5'-phosphate + diphosphate = orotate + 5-phospho-alpha-D-ribose 1-diphosphate. It participates in pyrimidine metabolism; UMP biosynthesis via de novo pathway; UMP from orotate: step 1/2. Its function is as follows. Catalyzes the transfer of a ribosyl phosphate group from 5-phosphoribose 1-diphosphate to orotate, leading to the formation of orotidine monophosphate (OMP). The sequence is that of Orotate phosphoribosyltransferase from Cupriavidus necator (strain ATCC 17699 / DSM 428 / KCTC 22496 / NCIMB 10442 / H16 / Stanier 337) (Ralstonia eutropha).